Reading from the N-terminus, the 363-residue chain is S-adenosylmethionine:tRNA ribosyltransferase-isomerase (363 aa).

It belongs to the QueA family. In terms of assembly, monomer.

The protein localises to the cytoplasm. The enzyme catalyses 7-aminomethyl-7-carbaguanosine(34) in tRNA + S-adenosyl-L-methionine = epoxyqueuosine(34) in tRNA + adenine + L-methionine + 2 H(+). The protein operates within tRNA modification; tRNA-queuosine biosynthesis. Its function is as follows. Transfers and isomerizes the ribose moiety from AdoMet to the 7-aminomethyl group of 7-deazaguanine (preQ1-tRNA) to give epoxyqueuosine (oQ-tRNA). In Haemophilus influenzae (strain 86-028NP), this protein is S-adenosylmethionine:tRNA ribosyltransferase-isomerase.